The sequence spans 262 residues: Phosphonates import ATP-binding protein PhnC (262 aa).

An ABC transporter domain is found at 5-253 (IRVEKLAKTF…RFDHLYRSIN (249 aa)). 37 to 44 (GPSGSGKS) serves as a coordination point for ATP.

This sequence belongs to the ABC transporter superfamily. Phosphonates importer (TC 3.A.1.9.1) family. In terms of assembly, the complex is composed of two ATP-binding proteins (PhnC), two transmembrane proteins (PhnE) and a solute-binding protein (PhnD).

The protein localises to the cell inner membrane. The enzyme catalyses phosphonate(out) + ATP + H2O = phosphonate(in) + ADP + phosphate + H(+). In terms of biological role, part of the ABC transporter complex PhnCDE involved in phosphonates import. Responsible for energy coupling to the transport system. The sequence is that of Phosphonates import ATP-binding protein PhnC from Escherichia coli O6:K15:H31 (strain 536 / UPEC).